We begin with the raw amino-acid sequence, 115 residues long: U31-theraphotoxin-Cg1a (115 aa).

The N-terminal stretch at M1 to G18 is a signal peptide. The propeptide occupies R19–A51. Cystine bridges form between C52–C67, C60–C73, C64–C113, and C66–C86.

It belongs to the neurotoxin 03 (Tx2) family. 02 subfamily. Expressed by the venom gland.

It localises to the secreted. In terms of biological role, probable ion channel inhibitor. This is U31-theraphotoxin-Cg1a from Chilobrachys guangxiensis (Chinese earth tiger tarantula).